Reading from the N-terminus, the 627-residue chain is tRNA uridine 5-carboxymethylaminomethyl modification enzyme MnmG (627 aa).

FAD is bound by residues 13 to 18 (GGGHAG), Val125, and Ser180. An NAD(+)-binding site is contributed by 274-288 (GPRYCPSIEDKVVRF). Gln371 is a binding site for FAD.

Belongs to the MnmG family. As to quaternary structure, homodimer. Heterotetramer of two MnmE and two MnmG subunits. FAD is required as a cofactor.

The protein localises to the cytoplasm. NAD-binding protein involved in the addition of a carboxymethylaminomethyl (cmnm) group at the wobble position (U34) of certain tRNAs, forming tRNA-cmnm(5)s(2)U34. The protein is tRNA uridine 5-carboxymethylaminomethyl modification enzyme MnmG of Francisella philomiragia subsp. philomiragia (strain ATCC 25017 / CCUG 19701 / FSC 153 / O#319-036).